The primary structure comprises 60 residues: Mating pheromone En-2 (60 aa).

Intrachain disulfides connect Cys11/Cys39, Cys24/Cys35, Cys31/Cys57, and Cys36/Cys48.

The protein localises to the secreted. In terms of biological role, mating ciliate pheromones (or gamones) are diffusible extracellular communication signals that distinguish different intraspecific classes of cells commonly referred to as 'mating types'. They prepare the latter for conjugation by changing their cell surface properties. The chain is Mating pheromone En-2 from Euplotes nobilii (Ciliate).